The primary structure comprises 413 residues: Putative competence-damage inducible protein (413 aa).

Belongs to the CinA family.

The protein is Putative competence-damage inducible protein of Acetivibrio thermocellus (strain ATCC 27405 / DSM 1237 / JCM 9322 / NBRC 103400 / NCIMB 10682 / NRRL B-4536 / VPI 7372) (Clostridium thermocellum).